A 710-amino-acid chain; its full sequence is Effector protein AvrPphD (710 aa).

A compositionally biased stretch (polar residues) spans 1–15 (MNPLRSIQHNITTPP). Disordered regions lie at residues 1 to 36 (MNPL…HPKR), 136 to 155 (ISFD…SVLS), and 173 to 207 (SSSL…DSGS).

Its subcellular location is the secreted. Its function is as follows. Effector protein involved in non-host recognition and able to elicit hypersensitive response (HR). In Pseudomonas savastanoi pv. phaseolicola (Pseudomonas syringae pv. phaseolicola), this protein is Effector protein AvrPphD (avrPphD).